A 401-amino-acid chain; its full sequence is Argininosuccinate synthase (401 aa).

An ATP-binding site is contributed by 9–17 (AYSGGLDTS). Tyr86 lines the L-citrulline pocket. Gly116 is a binding site for ATP. Thr118, Asn122, and Asp123 together coordinate L-aspartate. Residue Asn122 coordinates L-citrulline. 5 residues coordinate L-citrulline: Arg126, Ser174, Ser183, Glu259, and Tyr271.

Belongs to the argininosuccinate synthase family. Type 1 subfamily. In terms of assembly, homotetramer.

The protein localises to the cytoplasm. The enzyme catalyses L-citrulline + L-aspartate + ATP = 2-(N(omega)-L-arginino)succinate + AMP + diphosphate + H(+). It functions in the pathway amino-acid biosynthesis; L-arginine biosynthesis; L-arginine from L-ornithine and carbamoyl phosphate: step 2/3. The chain is Argininosuccinate synthase from Bacillus cytotoxicus (strain DSM 22905 / CIP 110041 / 391-98 / NVH 391-98).